Consider the following 182-residue polypeptide: NADH-quinone oxidoreductase subunit 9 (182 aa).

4Fe-4S ferredoxin-type domains follow at residues 43–73 (LTRHPNGLEKCIGCSLCAAACPAYAIYVEPA) and 89–118 (KVYEINMLRCIFCGLCEEACPTGAIVLGYD). [4Fe-4S] cluster contacts are provided by Cys-53, Cys-56, Ser-57, Cys-59, Cys-63, Cys-98, Ile-99, Cys-101, Cys-104, and Cys-108.

This sequence belongs to the complex I 23 kDa subunit family. In terms of assembly, NDH-1 is composed of 15 different subunits, Nqo1 to Nqo15. The complex has a L-shaped structure, with the hydrophobic arm (subunits Nqo7, Nqo8 and Nqo10 to Nqo14) embedded in the membrane and the hydrophilic peripheral arm (subunits Nqo1 to Nqo6, Nqo9 and Nqo15) protruding into the bacterial cytoplasm. The hydrophilic domain contains all the redox centers. It depends on [4Fe-4S] cluster as a cofactor.

It localises to the cell membrane. It carries out the reaction a quinone + NADH + 5 H(+)(in) = a quinol + NAD(+) + 4 H(+)(out). NDH-1 shuttles electrons from NADH, via FMN and iron-sulfur (Fe-S) centers, to quinones in the respiratory chain. The immediate electron acceptor for the enzyme in this species is menaquinone. Couples the redox reaction to proton translocation (for every two electrons transferred, four hydrogen ions are translocated across the cytoplasmic membrane), and thus conserves the redox energy in a proton gradient required for the synthesis of ATP. The role of the Nqo9 subunit appears to provide a 'connecting chain' of two clusters between cluster N5 and the terminal cluster N2, and to stabilize the structure of the complex by interacting with other subunits. The sequence is that of NADH-quinone oxidoreductase subunit 9 (nqo9) from Thermus thermophilus (strain ATCC 27634 / DSM 579 / HB8).